A 551-amino-acid polypeptide reads, in one-letter code: E3 ubiquitin-protein ligase HEL1 (551 aa).

Positions 175-388 (NDFTCIICCD…KNFFQCTMYK (214 aa)) are TRIAD supradomain. 10 residues coordinate Zn(2+): cysteine 179, cysteine 182, cysteine 200, cysteine 203, cysteine 301, cysteine 304, histidine 309, cysteine 314, cysteine 341, and cysteine 344. The segment at 179 to 225 (CIICCDKKDTETFALECGHEYCINCYRHYIKDKLHEGNIITCMDCSL) adopts an RING-type 1 zinc-finger fold. The IBR-type zinc finger occupies 242 to 314 (SKLMDSSIKS…GFEVHSPADC (73 aa)). The RING-type 2; atypical zinc finger occupies 341-370 (CPKCSVNIEKNGGCNHMVCSSCKYEFCWIC). Cysteine 354 is an active-site residue. Zn(2+) is bound by residues cysteine 359, cysteine 362, cysteine 367, cysteine 370, histidine 377, and cysteine 384.

The protein belongs to the RBR family. As to quaternary structure, interacts with the E2 ubiquitin-conjugating enzyme UBC4 and histones H3 and H4.

The catalysed reaction is [E2 ubiquitin-conjugating enzyme]-S-ubiquitinyl-L-cysteine + [acceptor protein]-L-lysine = [E2 ubiquitin-conjugating enzyme]-L-cysteine + [acceptor protein]-N(6)-ubiquitinyl-L-lysine.. It participates in protein modification; protein ubiquitination. Functionally, probable ubiquitin-protein ligase involved in the degradation-related ubiquitination of histones. Contributes to the post-translational regulation of histone protein levels by polyubiquitination of excess histones for subsequent degradation. In Saccharomyces cerevisiae (strain ATCC 204508 / S288c) (Baker's yeast), this protein is E3 ubiquitin-protein ligase HEL1.